A 432-amino-acid chain; its full sequence is Short/branched chain specific acyl-CoA dehydrogenase, mitochondrial (432 aa).

A mitochondrion-targeting transit peptide spans 1–33; it reads MEGLAVRLLRGSRLLRRNFPTCLSSWKIPPHVS. Position 70 is an N6-acetyllysine; alternate (Lys-70). Lys-70 carries the N6-succinyllysine; alternate modification. FAD contacts are provided by residues 174 to 183 and 207 to 209; these read FCLSEAGAGS and WIS. Ser-183 serves as a coordination point for substrate. The residue at position 183 (Ser-183) is a Phosphoserine. 2 residues coordinate substrate: Tyr-229 and Tyr-283. Lys-284 carries the N6-acetyllysine; alternate modification. Lys-284 carries the N6-succinyllysine; alternate modification. Residue 291–294 coordinates substrate; it reads NEGR. FAD contacts are provided by residues Arg-319, Gln-330, and 387 to 391; that span reads EWMGG. Catalysis depends on Glu-414, which acts as the Proton acceptor. 416 to 418 contributes to the FAD binding site; that stretch reads ASN. Lys-426 carries the post-translational modification N6-acetyllysine.

Belongs to the acyl-CoA dehydrogenase family. Homotetramer. FAD is required as a cofactor.

The protein resides in the mitochondrion matrix. The enzyme catalyses 2-methylbutanoyl-CoA + oxidized [electron-transfer flavoprotein] + H(+) = (2E)-2-methylbut-2-enoyl-CoA + reduced [electron-transfer flavoprotein]. The catalysed reaction is (2S)-2-methylbutanoyl-CoA + oxidized [electron-transfer flavoprotein] + H(+) = (2E)-2-methylbut-2-enoyl-CoA + reduced [electron-transfer flavoprotein]. It catalyses the reaction (2R)-2-methylbutanoyl-CoA + oxidized [electron-transfer flavoprotein] + H(+) = ethylacryloyl-CoA + reduced [electron-transfer flavoprotein]. It carries out the reaction butanoyl-CoA + oxidized [electron-transfer flavoprotein] + H(+) = (2E)-butenoyl-CoA + reduced [electron-transfer flavoprotein]. The enzyme catalyses 2-methylpropanoyl-CoA + oxidized [electron-transfer flavoprotein] + H(+) = 2-methylpropenoyl-CoA + reduced [electron-transfer flavoprotein]. The catalysed reaction is hexanoyl-CoA + oxidized [electron-transfer flavoprotein] + H(+) = (2E)-hexenoyl-CoA + reduced [electron-transfer flavoprotein]. It catalyses the reaction valproyl-CoA + oxidized [electron-transfer flavoprotein] + H(+) = (2E)-2-propylpent-2-enoyl-CoA + reduced [electron-transfer flavoprotein]. The protein operates within lipid metabolism; mitochondrial fatty acid beta-oxidation. Its pathway is amino-acid degradation; L-isoleucine degradation. Its function is as follows. Short and branched chain specific acyl-CoA dehydrogenase that catalyzes the removal of one hydrogen from C-2 and C-3 of the fatty acyl-CoA thioester, resulting in the formation of trans-2-enoyl-CoA. Among the different mitochondrial acyl-CoA dehydrogenases, acts specifically on short and branched chain acyl-CoA derivatives such as (S)-2-methylbutyryl-CoA as well as short straight chain acyl-CoAs such as butyryl-CoA. Plays an important role in the metabolism of L-isoleucine by catalyzing the dehydrogenation of 2-methylbutyryl-CoA, one of the steps of the L-isoleucine catabolic pathway. Can also act on valproyl-CoA, a metabolite of the valproic acid drug. The protein is Short/branched chain specific acyl-CoA dehydrogenase, mitochondrial (ACADSB) of Pongo abelii (Sumatran orangutan).